The following is a 669-amino-acid chain: Filensin (669 aa).

Positions 1-33 are head; the sequence is MYRRSYVFQARQERYERAQPAGPAAQPGGTAPG. At serine 5 the chain carries Phosphoserine. In terms of domain architecture, IF rod spans 33–318; the sequence is GLAALQALGE…RIIEIEGSRL (286 aa). The coil 1A stretch occupies residues 34-68; sequence LAALQALGERVAVQVQRARALQQRHAGLRRQLDAF. The residue at position 35 (alanine 35) is an N-acetylalanine. The interval 69–77 is linker 1; it reads QRLGEQPGP. The segment at 78–177 is coil 1B; sequence EDALARHVEA…RYKKNLLEIQ (100 aa). The segment at 178-194 is linker 12; it reads TYITVLQQIVQTAPQVS. Positions 195–318 are coil 2; that stretch reads LVTGMRESGL…RIIEIEGSRL (124 aa). The interval 319-669 is tail; the sequence is SSVFIETPIS…GEKSLPDTRA (351 aa). Serine 339 carries the post-translational modification Phosphoserine. Disordered stretches follow at residues 380–435, 449–468, and 505–618; these read VEET…GGQI, RVSG…FTKG, and HHDG…KALS. A compositionally biased stretch (gly residues) spans 408 to 417; that stretch reads SQPGAGGGHG. The N-myristoyl glycine moiety is linked to residue glycine 432. Serine 513 carries the post-translational modification Phosphoserine. Basic and acidic residues predominate over residues 545–570; that stretch reads NGLRAKEPKDLEEKDDDGKKEAEGSR. Residues 583–593 are compositionally biased toward polar residues; it reads PSTSHSQTSGS. Residue threonine 585 is modified to Phosphothreonine.

Belongs to the intermediate filament family. As to quaternary structure, part of a complex required for lens intermediate filament formation composed of BFSP1, BFSP2 and CRYAA. Identified in a complex that contains VIM, EZR, AHNAK, BFSP1, BFSP2, ANK2, PLEC, PRX and spectrin. Found in a complex composed of PPL (via C-terminal linker domain), BFSP1 and BFSP2 in the retinal lens. Within the complex interacts with BFSP2. Interacts (via C-terminus) with MIP (via C-terminus) in aged lens fiber cells. In terms of processing, proteolytically cleaved during lens cell fiber differentiation with increased fragmentation as fiber cell age increases. Post-translationally, myristoylated at Gly-432 following proteolytic cleavage at Asp-431. Acetylated at Ala-35 following proteolytic cleavage at Leu-34. In terms of tissue distribution, detected in eye lens fiber cells (at protein level). Expressed in retinal lens epithelial cells (at protein level).

Its subcellular location is the cell membrane. The protein localises to the cytoplasm. It is found in the cytoskeleton. It localises to the cell cortex. Required for the correct formation of lens intermediate filaments as part of a complex composed of BFSP1, BFSP2 and CRYAA. Involved in altering the calcium regulation of MIP water permeability. This is Filensin (Bfsp1) from Mus musculus (Mouse).